The chain runs to 722 residues: Cellulose synthase-like protein G2 (722 aa).

Helical transmembrane passes span 25-45 (IYAVFHTCGIIALMYHHVHSI) and 51-71 (TLITCLLLLSDIVLAFMWATT). Residues Asp-139 and Asp-437 contribute to the active site. A run of 6 helical transmembrane segments spans residues 514–534 (FWPFWCIPLVVYGILPQVALI), 548–568 (FWLYIILFLGGYAQDLSDFLL), 583–605 (WMVRGLSSFFFGFTEFTLKTLNL), 635–655 (PSSSMFLPITTVAIMNLLAFM), 660–680 (GIFTWGEGPVLELMLASFAVV), and 702–722 (ICFLAGLLSFVLTGSGYFFLK).

It belongs to the glycosyltransferase 2 family. Plant cellulose synthase-like G subfamily. In terms of tissue distribution, expressed in young seedlings, primarily in the vascular tissue.

It localises to the golgi apparatus membrane. Functionally, thought to be a Golgi-localized beta-glycan synthase that polymerize the backbones of noncellulosic polysaccharides (hemicelluloses) of plant cell wall. This Arabidopsis thaliana (Mouse-ear cress) protein is Cellulose synthase-like protein G2 (CSLG2).